Consider the following 368-residue polypeptide: DNA replication and repair protein RecF (368 aa).

Residue 30–37 (GNNAQGKT) participates in ATP binding.

The protein belongs to the RecF family.

The protein localises to the cytoplasm. Functionally, the RecF protein is involved in DNA metabolism; it is required for DNA replication and normal SOS inducibility. RecF binds preferentially to single-stranded, linear DNA. It also seems to bind ATP. This Streptococcus pyogenes serotype M18 (strain MGAS8232) protein is DNA replication and repair protein RecF.